A 698-amino-acid polypeptide reads, in one-letter code: MARKTPIERYRNIGISAHIDAGKTTTTERILFYTGVNHKIGEVHDGAATMDWMEQEQERGITITSAATTTFWKGMAMQFPEHRFNIIDTPGHVDFTIEVERSMRVLDGAVMVYCAVGGVQPQSETVWRQANKYKVPRIAFVNKMDRQGANFFRAVEQVKTRLRGNPVPIVVPIGAEDGFSGVVDLLKMKAIIWDEASQGMKFEYGDIPADLVSVAEEWREKMVEAAAEVSDEMMDKYLGGETLTEEEIIAGLRERTLKCEIQPMLCGSAFKNKGVQRMLDAVIELLPSPTEVPAIKGETDGVEAERHASDDEPFSALAFKLMNDPYVGQLTFFRVYSGVVKSGDTVLNSVKGKKERIGRIVQMHANDRKEIEEVRAGDIAAAIGLKEVTTGETLCAVDAEIILERMEFPDPVIHVAVEPKTKADQEKMGVALNRLAKEDPSFRVRTDEESGQTIISGMGELHLEILVDRMKREFGVEANVGAPQVAYRETITKTVTDVEGKHVKQSGGKGQYGHAVITLEPSGEGKGYQFFDEIKGGVIPREFIPSVDKGIQNTLGNGILAGFPVVDVTVRLTFGSYHDVDSSQIAFELAGSLAFKEAMRRAGPCILEPMMAVEVETPEEYMGDVMGDLNRRRGMVQGMDDDGLGGKKIKAEVPLAEMFGYSTDLRSATQGRATYSMEFKHYSEAPKHVAEAVMAAKK.

One can recognise a tr-type G domain in the interval 8–290 (ERYRNIGISA…AVIELLPSPT (283 aa)). GTP contacts are provided by residues 17-24 (AHIDAGKT), 88-92 (DTPGH), and 142-145 (NKMD).

Belongs to the TRAFAC class translation factor GTPase superfamily. Classic translation factor GTPase family. EF-G/EF-2 subfamily.

The protein localises to the cytoplasm. Its function is as follows. Catalyzes the GTP-dependent ribosomal translocation step during translation elongation. During this step, the ribosome changes from the pre-translocational (PRE) to the post-translocational (POST) state as the newly formed A-site-bound peptidyl-tRNA and P-site-bound deacylated tRNA move to the P and E sites, respectively. Catalyzes the coordinated movement of the two tRNA molecules, the mRNA and conformational changes in the ribosome. The polypeptide is Elongation factor G (Chromobacterium violaceum (strain ATCC 12472 / DSM 30191 / JCM 1249 / CCUG 213 / NBRC 12614 / NCIMB 9131 / NCTC 9757 / MK)).